The following is an 89-amino-acid chain: Small ribosomal subunit protein uS15 (89 aa).

The protein belongs to the universal ribosomal protein uS15 family. In terms of assembly, part of the 30S ribosomal subunit. Forms a bridge to the 50S subunit in the 70S ribosome, contacting the 23S rRNA.

In terms of biological role, one of the primary rRNA binding proteins, it binds directly to 16S rRNA where it helps nucleate assembly of the platform of the 30S subunit by binding and bridging several RNA helices of the 16S rRNA. Its function is as follows. Forms an intersubunit bridge (bridge B4) with the 23S rRNA of the 50S subunit in the ribosome. The chain is Small ribosomal subunit protein uS15 from Baumannia cicadellinicola subsp. Homalodisca coagulata.